Reading from the N-terminus, the 255-residue chain is Imidazole glycerol phosphate synthase subunit HisF (255 aa).

Catalysis depends on residues aspartate 12 and aspartate 131.

This sequence belongs to the HisA/HisF family. Heterodimer of HisH and HisF.

It is found in the cytoplasm. The enzyme catalyses 5-[(5-phospho-1-deoxy-D-ribulos-1-ylimino)methylamino]-1-(5-phospho-beta-D-ribosyl)imidazole-4-carboxamide + L-glutamine = D-erythro-1-(imidazol-4-yl)glycerol 3-phosphate + 5-amino-1-(5-phospho-beta-D-ribosyl)imidazole-4-carboxamide + L-glutamate + H(+). It functions in the pathway amino-acid biosynthesis; L-histidine biosynthesis; L-histidine from 5-phospho-alpha-D-ribose 1-diphosphate: step 5/9. Its function is as follows. IGPS catalyzes the conversion of PRFAR and glutamine to IGP, AICAR and glutamate. The HisF subunit catalyzes the cyclization activity that produces IGP and AICAR from PRFAR using the ammonia provided by the HisH subunit. In Neisseria gonorrhoeae (strain ATCC 700825 / FA 1090), this protein is Imidazole glycerol phosphate synthase subunit HisF.